Reading from the N-terminus, the 492-residue chain is KRAB-A domain-containing protein 2 (492 aa).

The 82-residue stretch at leucine 36 to threonine 117 folds into the KRAB domain. At serine 115 the chain carries Phosphoserine. Threonine 117 carries the post-translational modification Phosphothreonine. The Integrase catalytic domain maps to arginine 247–lysine 415. The stretch at arginine 427–arginine 457 forms a coiled coil. A compositionally biased stretch (basic and acidic residues) spans glutamate 455 to serine 465. The segment at glutamate 455–tryptophan 492 is disordered. Polar residues predominate over residues glutamate 479–tryptophan 492.

The protein is KRAB-A domain-containing protein 2 (KRBA2) of Homo sapiens (Human).